Reading from the N-terminus, the 468-residue chain is MYHIHRLLAPIRSNSVFFSLAQLPKPSLIGCRYKSNNVGSQDSKRTSKNSILHNLGSYSNSAESEILNKLKPITPNDLYVSCTSFDRIGNITAVSRKYPKMQFLKENHLFPRDLRKIDTSSIDVVPVIMIRPSSAILVNLLHIKAIIKKDNVMVFDTSKSEVATKLGIFMYDLELKLKSPANNVCYEFRALESILVSVTSYLEAEIKLHRQQCGIILAELEDEVDRAKLQELLIRSKKLSSFHQRAILIRDVLEELLENDEDLAGMYLTDLKRFEPEEENYEEIESILESYYNQCDEYVQQAGSLLSDIKATEEIVNIILDANRNSLMLFELKITVYTLGFTVATLVPAFYGMNLKNYIEETNWGFGLVLVVSLLQGLAITWLNFRKLHKVQKLTMMGTSNSSKAGTGLSRHIPPTSRVDRWKRGSFLYRLFYGSGGKYSKPSKKFDRPTNREKDAMWRMINDDKAMK.

Residues 1-33 (MYHIHRLLAPIRSNSVFFSLAQLPKPSLIGCRY) constitute a mitochondrion transit peptide. Residues 327 to 347 (LMLFELKITVYTLGFTVATLV) form a helical membrane-spanning segment. The YGMN signature appears at 351 to 354 (YGMN). The chain crosses the membrane as a helical span at residues 365–385 (GFGLVLVVSLLQGLAITWLNF).

The protein belongs to the CorA metal ion transporter (MIT) (TC 1.A.35) family. Homopentamer. Forms homooligomers. Interacts with MFM1.

The protein resides in the mitochondrion inner membrane. High-conductance magnesium-selective channel that mediates the influx of magnesium into the mitochondrial matrix. Essential for the splicing of mRNA group II introns in mitochondria by affecting mitochondrial magnesium concentrations, which are critical for group II intron splicing. It also suppresses a variety of mitochondrial intron mutations and its absence may disturb the assembly of mitochondrial membrane complexes. The polypeptide is Mitochondrial inner membrane magnesium transporter MRS2 (MRS2) (Candida albicans (strain SC5314 / ATCC MYA-2876) (Yeast)).